A 962-amino-acid chain; its full sequence is Translation initiation factor IF-2 (962 aa).

Residues 101 to 366 form a disordered region; sequence AAQTQAAPVR…KKGKKLKLEP (266 aa). A compositionally biased stretch (basic and acidic residues) spans 117–141; sequence DAAKARAEAATRAEARAKAEAEAAK. A compositionally biased stretch (low complexity) spans 145–157; it reads AKAGNKAKPAAQK. Residues 173 to 216 are compositionally biased toward basic and acidic residues; the sequence is KPAEESKAEKAQADKMPSKKPAEPKEKAAKPKHERNGKGKDAKK. Low complexity predominate over residues 219-234; the sequence is KPAAPAVPQPVVSAEE. Residues 235–269 are compositionally biased toward basic and acidic residues; that stretch reads QAQRDEEARRAAALRAHQEALLKEKQERQARREAM. A compositionally biased stretch (low complexity) spans 270 to 283; that stretch reads KQQAEQQAKAAQEA. The span at 338 to 354 shows a compositional bias: basic and acidic residues; that stretch reads GGRDRNNARNGDDERVR. Positions 462-631 constitute a tr-type G domain; it reads PRPPVVTVMG…LLEAEVLELT (170 aa). Positions 471–478 are G1; that stretch reads GHVDHGKT. Residue 471 to 478 participates in GTP binding; the sequence is GHVDHGKT. Positions 496-500 are G2; the sequence is GITQH. The G3 stretch occupies residues 517–520; that stretch reads DTPG. GTP is bound by residues 517–521 and 571–574; these read DTPGH and NKID. Residues 571–574 form a G4 region; that stretch reads NKID. The interval 607-609 is G5; it reads SAK.

Belongs to the TRAFAC class translation factor GTPase superfamily. Classic translation factor GTPase family. IF-2 subfamily.

It localises to the cytoplasm. Its function is as follows. One of the essential components for the initiation of protein synthesis. Protects formylmethionyl-tRNA from spontaneous hydrolysis and promotes its binding to the 30S ribosomal subunits. Also involved in the hydrolysis of GTP during the formation of the 70S ribosomal complex. The chain is Translation initiation factor IF-2 from Neisseria meningitidis serogroup A / serotype 4A (strain DSM 15465 / Z2491).